The following is a 182-amino-acid chain: Ribosome-recycling factor (182 aa).

This sequence belongs to the RRF family.

It is found in the cytoplasm. Functionally, responsible for the release of ribosomes from messenger RNA at the termination of protein biosynthesis. May increase the efficiency of translation by recycling ribosomes from one round of translation to another. The sequence is that of Ribosome-recycling factor from Parasynechococcus marenigrum (strain WH8102).